The following is a 562-amino-acid chain: Proton channel OTOP2 (562 aa).

Residues methionine 1–proline 20 are disordered. A run of 12 helical transmembrane segments spans residues leucine 30–glycine 50, valine 62–leucine 82, proline 100–phenylalanine 120, isoleucine 137–serine 157, threonine 169–valine 189, phenylalanine 241–methionine 261, phenylalanine 289–isoleucine 309, alanine 324–leucine 344, leucine 371–valine 391, leucine 402–isoleucine 422, aspartate 495–alanine 515, and phenylalanine 527–tyrosine 547.

This sequence belongs to the otopetrin family.

It localises to the cell membrane. It catalyses the reaction H(+)(in) = H(+)(out). With respect to regulation, actives at neutral and alkaline extracellular pH, acid extracellular pH appears to inhibit the channel. Insensitive to activation by Zn(2+). Proton-selective ion channel open at neutral pH. Actives at neutral and alkaline extracellular pH, likely participates in some alkali-related physiological activities. The polypeptide is Proton channel OTOP2 (Homo sapiens (Human)).